The chain runs to 126 residues: Late histone H2A.3, gonadal (126 aa).

Residues 1–18 (MSGRGKGAKAKGKAKSRS) are compositionally biased toward basic residues. The disordered stretch occupies residues 1–21 (MSGRGKGAKAKGKAKSRSSRA). Position 2 is an N-acetylserine (S2). S2 bears the Phosphoserine mark. At Q104 the chain carries N5-methylglutamine. K119 is covalently cross-linked (Glycyl lysine isopeptide (Lys-Gly) (interchain with G-Cter in ubiquitin)).

The protein belongs to the histone H2A family. In terms of assembly, the nucleosome is a histone octamer containing two molecules each of H2A, H2B, H3 and H4 assembled in one H3-H4 heterotetramer and two H2A-H2B heterodimers. The octamer wraps approximately 147 bp of DNA. Monoubiquitination of Lys-119 gives a specific tag for epigenetic transcriptional repression. In terms of processing, phosphorylation of Ser-2 directly represses transcription.

The protein resides in the nucleus. It is found in the chromosome. Functionally, core component of nucleosome. Nucleosomes wrap and compact DNA into chromatin, limiting DNA accessibility to the cellular machineries which require DNA as a template. Histones thereby play a central role in transcription regulation, DNA repair, DNA replication and chromosomal stability. DNA accessibility is regulated via a complex set of post-translational modifications of histones, also called histone code, and nucleosome remodeling. This Psammechinus miliaris (Green sea urchin) protein is Late histone H2A.3, gonadal.